The sequence spans 749 residues: 5-methyltetrahydropteroyltriglutamate--homocysteine methyltransferase (749 aa).

Residues 18–21 and K112 contribute to the 5-methyltetrahydropteroyltri-L-glutamate site; that span reads REWK. L-homocysteine contacts are provided by residues 420–422 and E473; that span reads IGS. L-methionine-binding positions include 420-422 and E473; that span reads IGS. W550 provides a ligand contact to 5-methyltetrahydropteroyltri-L-glutamate. D588 contributes to the L-homocysteine binding site. D588 contributes to the L-methionine binding site. Residue E594 coordinates 5-methyltetrahydropteroyltri-L-glutamate. Positions 630, 632, and 654 each coordinate Zn(2+). The active-site Proton donor is H683. C715 contacts Zn(2+).

This sequence belongs to the vitamin-B12 independent methionine synthase family. The cofactor is Zn(2+).

The catalysed reaction is 5-methyltetrahydropteroyltri-L-glutamate + L-homocysteine = tetrahydropteroyltri-L-glutamate + L-methionine. It functions in the pathway amino-acid biosynthesis; L-methionine biosynthesis via de novo pathway; L-methionine from L-homocysteine (MetE route): step 1/1. Functionally, catalyzes the transfer of a methyl group from 5-methyltetrahydrofolate to homocysteine resulting in methionine formation. This is 5-methyltetrahydropteroyltriglutamate--homocysteine methyltransferase from Staphylococcus haemolyticus (strain JCSC1435).